The sequence spans 182 residues: Large ribosomal subunit protein uL13 (182 aa).

This sequence belongs to the universal ribosomal protein uL13 family. As to quaternary structure, part of the 50S ribosomal subunit.

In terms of biological role, this protein is one of the early assembly proteins of the 50S ribosomal subunit, although it is not seen to bind rRNA by itself. It is important during the early stages of 50S assembly. This chain is Large ribosomal subunit protein uL13, found in Pyrobaculum neutrophilum (strain DSM 2338 / JCM 9278 / NBRC 100436 / V24Sta) (Thermoproteus neutrophilus).